The following is a 164-amino-acid chain: UPF0304 protein YfbU (164 aa).

It belongs to the UPF0304 family.

The polypeptide is UPF0304 protein YfbU (Escherichia coli O139:H28 (strain E24377A / ETEC)).